The chain runs to 229 residues: uncharacterized protein (229 aa).

This is an uncharacterized protein from Borreliella burgdorferi (strain ATCC 35210 / DSM 4680 / CIP 102532 / B31) (Borrelia burgdorferi).